A 129-amino-acid chain; its full sequence is Trefoil factor 2 (129 aa).

The first 23 residues, 1 to 23 (MGPRGAPLLAVVLVLGLHALVEG), serve as a signal peptide directing secretion. P-type domains lie at 29–73 (CRCS…FHPL) and 79–122 (EQCV…FFPQ). 7 disulfides stabilise this stretch: Cys-29-Cys-127, Cys-31-Cys-58, Cys-42-Cys-57, Cys-52-Cys-69, Cys-81-Cys-107, Cys-91-Cys-106, and Cys-101-Cys-118.

In terms of tissue distribution, stomach and pancreas.

Its subcellular location is the secreted. In terms of biological role, inhibits gastrointestinal motility and gastric acid secretion. Could function as a structural component of gastric mucus, possibly by stabilizing glycoproteins in the mucus gel through interactions with carbohydrate side chains. The polypeptide is Trefoil factor 2 (Tff2) (Mus musculus (Mouse)).